Reading from the N-terminus, the 179-residue chain is Probable chorismate pyruvate-lyase (179 aa).

Residues Arg-82, Leu-120, and Glu-165 each coordinate substrate.

The protein belongs to the UbiC family.

Its subcellular location is the cytoplasm. The catalysed reaction is chorismate = 4-hydroxybenzoate + pyruvate. The protein operates within cofactor biosynthesis; ubiquinone biosynthesis. Its function is as follows. Removes the pyruvyl group from chorismate, with concomitant aromatization of the ring, to provide 4-hydroxybenzoate (4HB) for the ubiquinone pathway. The protein is Probable chorismate pyruvate-lyase of Vibrio vulnificus (strain CMCP6).